Consider the following 2096-residue polypeptide: HEAT repeat-containing protein 1 homolog (2096 aa).

Residues 2058–2096 (TVPFIAELLEDEHQRVEKNTRTGVQELETILGESVQKYL) form an HEAT repeat.

The protein belongs to the HEATR1/UTP10 family. As to quaternary structure, part of the small subunit (SSU) processome, composed of more than 70 proteins and the RNA chaperone small nucleolar RNA (snoRNA) U3. Interacts with MYC; the interaction is required for localization of MYC to the nucleolus.

It is found in the nucleus. Its subcellular location is the nucleolus. Its function is as follows. Ribosome biogenesis factor; required for recruitment of Myc to nucleoli. Involved in nucleolar processing of pre-18S ribosomal RNA. Required for optimal pre-ribosomal RNA transcription by RNA polymerase I. Part of the small subunit (SSU) processome, first precursor of the small eukaryotic ribosomal subunit. During the assembly of the SSU processome in the nucleolus, many ribosome biogenesis factors, an RNA chaperone and ribosomal proteins associate with the nascent pre-rRNA and work in concert to generate RNA folding, modifications, rearrangements and cleavage as well as targeted degradation of pre-ribosomal RNA by the RNA exosome. Involved in neuronal-lineage cell proliferation during larval development. The protein is HEAT repeat-containing protein 1 homolog of Drosophila melanogaster (Fruit fly).